Reading from the N-terminus, the 354-residue chain is DNA polymerase IV (354 aa).

One can recognise a UmuC domain in the interval 6–187 (IIHVDCDCFY…LPVARLHGVG (182 aa)). Mg(2+) contacts are provided by D10 and D105. The active site involves E106.

It belongs to the DNA polymerase type-Y family. As to quaternary structure, monomer. Requires Mg(2+) as cofactor.

The protein localises to the cytoplasm. The enzyme catalyses DNA(n) + a 2'-deoxyribonucleoside 5'-triphosphate = DNA(n+1) + diphosphate. Functionally, poorly processive, error-prone DNA polymerase involved in untargeted mutagenesis. Copies undamaged DNA at stalled replication forks, which arise in vivo from mismatched or misaligned primer ends. These misaligned primers can be extended by PolIV. Exhibits no 3'-5' exonuclease (proofreading) activity. May be involved in translesional synthesis, in conjunction with the beta clamp from PolIII. The chain is DNA polymerase IV from Pseudomonas putida (strain ATCC 47054 / DSM 6125 / CFBP 8728 / NCIMB 11950 / KT2440).